The chain runs to 273 residues: Anthranilate synthase beta subunit 2, chloroplastic (273 aa).

The transit peptide at 1 to 47 directs the protein to the chloroplast; that stretch reads MATAARLLPKIQSPASPAVAEARRRRPSSLRLGVTSGPARTLKQKLV. The disordered stretch occupies residues 15–35; that stretch reads ASPAVAEARRRRPSSLRLGVT. The Glutamine amidotransferase type-1 domain maps to 70–269; sequence PIIVIDNYDS…IKIIEGYEAL (200 aa). Residue 121 to 123 participates in L-glutamine binding; sequence GPG. Catalysis depends on Cys-148, which acts as the Nucleophile. L-glutamine contacts are provided by residues Gln-152 and 202-203; that span reads SL. Residues His-243 and Glu-245 contribute to the active site.

Heterotetramer consisting of two non-identical subunits: a beta subunit and a large alpha subunit. Expressed in roots and leaves.

The protein localises to the plastid. Its subcellular location is the chloroplast. The catalysed reaction is chorismate + L-glutamine = anthranilate + pyruvate + L-glutamate + H(+). It functions in the pathway amino-acid biosynthesis; L-tryptophan biosynthesis; L-tryptophan from chorismate: step 1/5. In terms of biological role, part of a heterotetrameric complex that catalyzes the two-step biosynthesis of anthranilate, an intermediate in the biosynthesis of L-tryptophan. In the first step, the glutamine-binding beta subunit of anthranilate synthase (AS) provides the glutamine amidotransferase activity which generates ammonia as a substrate that, along with chorismate, is used in the second step, catalyzed by the large alpha subunit of AS to produce anthranilate. The protein is Anthranilate synthase beta subunit 2, chloroplastic of Oryza sativa subsp. japonica (Rice).